Consider the following 179-residue polypeptide: Large ribosomal subunit protein uL5 (179 aa).

This sequence belongs to the universal ribosomal protein uL5 family. As to quaternary structure, part of the 50S ribosomal subunit; part of the 5S rRNA/L5/L18/L25 subcomplex. Contacts the 5S rRNA and the P site tRNA. Forms a bridge to the 30S subunit in the 70S ribosome.

This is one of the proteins that bind and probably mediate the attachment of the 5S RNA into the large ribosomal subunit, where it forms part of the central protuberance. In the 70S ribosome it contacts protein S13 of the 30S subunit (bridge B1b), connecting the 2 subunits; this bridge is implicated in subunit movement. Contacts the P site tRNA; the 5S rRNA and some of its associated proteins might help stabilize positioning of ribosome-bound tRNAs. This is Large ribosomal subunit protein uL5 from Pseudomonas savastanoi pv. phaseolicola (strain 1448A / Race 6) (Pseudomonas syringae pv. phaseolicola (strain 1448A / Race 6)).